A 137-amino-acid polypeptide reads, in one-letter code: Large ribosomal subunit protein uL22 (137 aa).

Belongs to the universal ribosomal protein uL22 family. Part of the 50S ribosomal subunit.

Its function is as follows. This protein binds specifically to 23S rRNA; its binding is stimulated by other ribosomal proteins, e.g. L4, L17, and L20. It is important during the early stages of 50S assembly. It makes multiple contacts with different domains of the 23S rRNA in the assembled 50S subunit and ribosome. Functionally, the globular domain of the protein is located near the polypeptide exit tunnel on the outside of the subunit, while an extended beta-hairpin is found that lines the wall of the exit tunnel in the center of the 70S ribosome. The protein is Large ribosomal subunit protein uL22 of Flavobacterium johnsoniae (strain ATCC 17061 / DSM 2064 / JCM 8514 / BCRC 14874 / CCUG 350202 / NBRC 14942 / NCIMB 11054 / UW101) (Cytophaga johnsonae).